A 150-amino-acid chain; its full sequence is Urease subunit beta (150 aa).

Over residues 122 to 140 the composition is skewed to low complexity; the sequence is GAVVGDSPAATPGTTGATG. The disordered stretch occupies residues 122-150; sequence GAVVGDSPAATPGTTGATGDLPGYLGEGS.

It belongs to the urease beta subunit family. As to quaternary structure, heterotrimer of UreA (gamma), UreB (beta) and UreC (alpha) subunits. Three heterotrimers associate to form the active enzyme.

The protein resides in the cytoplasm. It catalyses the reaction urea + 2 H2O + H(+) = hydrogencarbonate + 2 NH4(+). It participates in nitrogen metabolism; urea degradation; CO(2) and NH(3) from urea (urease route): step 1/1. In Frankia alni (strain DSM 45986 / CECT 9034 / ACN14a), this protein is Urease subunit beta.